The following is a 377-amino-acid chain: DNA methyltransferase CcrM (377 aa).

The RAMA domain occupies 271 to 373; the sequence is LGKAELTVMT…LRKIIREQMA (103 aa).

The protein belongs to the N(4)/N(6)-methyltransferase family.

It carries out the reaction a 2'-deoxyadenosine in DNA + S-adenosyl-L-methionine = an N(6)-methyl-2'-deoxyadenosine in DNA + S-adenosyl-L-homocysteine + H(+). Functionally, a beta subtype methylase that recognizes the double-stranded sequence 5'-GANTC-3' and methylates on A-2 on both strands. Overexpression from a moderate-copy number plasmid (10-12 copies/cell) leads to enlarged, branched cells, many with 3-5 genome equivalents. Contributes to the accurate cell-cycle control of DNA replication and cellular morphology. This chain is DNA methyltransferase CcrM, found in Brucella abortus (strain 2308).